Consider the following 146-residue polypeptide: Nucleoside diphosphate kinase (146 aa).

Positions 11, 59, 87, 93, 104, and 114 each coordinate ATP. His117 (pros-phosphohistidine intermediate) is an active-site residue.

The protein belongs to the NDK family. As to quaternary structure, homotetramer. Mg(2+) is required as a cofactor.

Its subcellular location is the cytoplasm. It carries out the reaction a 2'-deoxyribonucleoside 5'-diphosphate + ATP = a 2'-deoxyribonucleoside 5'-triphosphate + ADP. The enzyme catalyses a ribonucleoside 5'-diphosphate + ATP = a ribonucleoside 5'-triphosphate + ADP. Its function is as follows. Major role in the synthesis of nucleoside triphosphates other than ATP. The ATP gamma phosphate is transferred to the NDP beta phosphate via a ping-pong mechanism, using a phosphorylated active-site intermediate. In Anaeromyxobacter sp. (strain Fw109-5), this protein is Nucleoside diphosphate kinase.